Here is a 648-residue protein sequence, read N- to C-terminus: 1-deoxy-D-xylulose-5-phosphate synthase 1 (648 aa).

Residues His-82 and 123–125 (AHS) contribute to the thiamine diphosphate site. Residue Asp-154 coordinates Mg(2+). Thiamine diphosphate is bound by residues 155–156 (GS), Asn-183, Tyr-292, and Glu-374. Position 183 (Asn-183) interacts with Mg(2+).

The protein belongs to the transketolase family. DXPS subfamily. As to quaternary structure, homodimer. The cofactor is Mg(2+). Thiamine diphosphate is required as a cofactor.

The catalysed reaction is D-glyceraldehyde 3-phosphate + pyruvate + H(+) = 1-deoxy-D-xylulose 5-phosphate + CO2. Its pathway is metabolic intermediate biosynthesis; 1-deoxy-D-xylulose 5-phosphate biosynthesis; 1-deoxy-D-xylulose 5-phosphate from D-glyceraldehyde 3-phosphate and pyruvate: step 1/1. In terms of biological role, catalyzes the acyloin condensation reaction between C atoms 2 and 3 of pyruvate and glyceraldehyde 3-phosphate to yield 1-deoxy-D-xylulose-5-phosphate (DXP). The protein is 1-deoxy-D-xylulose-5-phosphate synthase 1 of Cereibacter sphaeroides (strain ATCC 17023 / DSM 158 / JCM 6121 / CCUG 31486 / LMG 2827 / NBRC 12203 / NCIMB 8253 / ATH 2.4.1.) (Rhodobacter sphaeroides).